The primary structure comprises 174 residues: Late lactation protein B (174 aa).

Residues 1-18 (MKVLFLTIALSLFSILQA) form the signal peptide. A disulfide bridge links cysteine 77 with cysteine 169.

Belongs to the calycin superfamily. Lipocalin family. Mammary gland specific. Secreted in milk.

Its subcellular location is the secreted. Probably serves a role in the transport of a small ligand released during the hydrolysis of milk fat. The polypeptide is Late lactation protein B (LLPB) (Notamacropus eugenii (Tammar wallaby)).